Consider the following 92-residue polypeptide: UPF0223 protein SGO_1052 (92 aa).

Belongs to the UPF0223 family.

The sequence is that of UPF0223 protein SGO_1052 from Streptococcus gordonii (strain Challis / ATCC 35105 / BCRC 15272 / CH1 / DL1 / V288).